A 312-amino-acid polypeptide reads, in one-letter code: MSFRHTSVMPDQAVALLNCEKGKIVADCTLGGGGHAVRIAEQILPEGLLIGIDKDPAALAHAKQALSVFGERVLYVRGNFADFSEILSSLDIPAVDGVLLDLGLSFYQIDGSGRGFSFRKDEPLDMRMDPDQSLTAADLVNQSAEADLVRIFREFGEERYASRIARRIVEARRSAPVTTSGQLARIVTDAYPAKERHTAKIDPATRVFMALRIAVNTELENLERFLDTVIDRIKPGGRICVLSFHSLEDRMVKRRMKLWEKACVCPPGLPVCSCSKQRECRIVTRKALVPTAEEVQANPMARSVRLRAAEKV.

Residues 33–35 (GGH), Asp-53, Phe-80, Asp-101, and Gln-108 contribute to the S-adenosyl-L-methionine site.

This sequence belongs to the methyltransferase superfamily. RsmH family.

It localises to the cytoplasm. The enzyme catalyses cytidine(1402) in 16S rRNA + S-adenosyl-L-methionine = N(4)-methylcytidine(1402) in 16S rRNA + S-adenosyl-L-homocysteine + H(+). In terms of biological role, specifically methylates the N4 position of cytidine in position 1402 (C1402) of 16S rRNA. This Desulfosudis oleivorans (strain DSM 6200 / JCM 39069 / Hxd3) (Desulfococcus oleovorans) protein is Ribosomal RNA small subunit methyltransferase H.